A 147-amino-acid polypeptide reads, in one-letter code: Lysozyme C-1 (147 aa).

An N-terminal signal peptide occupies residues 1–18 (MKALIILGFLFLSVAVQG). The C-type lysozyme domain maps to 19 to 147 (KVFERCELAR…VSSYVEGCTL (129 aa)). 4 cysteine pairs are disulfide-bonded: Cys24–Cys145, Cys48–Cys133, Cys83–Cys99, and Cys95–Cys113. Residues Glu53 and Asp71 contribute to the active site.

The protein belongs to the glycosyl hydrolase 22 family. In terms of assembly, monomer. In terms of tissue distribution, stomach-specific.

The enzyme catalyses Hydrolysis of (1-&gt;4)-beta-linkages between N-acetylmuramic acid and N-acetyl-D-glucosamine residues in a peptidoglycan and between N-acetyl-D-glucosamine residues in chitodextrins.. Functionally, lysozymes have primarily a bacteriolytic function; those in tissues and body fluids are associated with the monocyte-macrophage system and enhance the activity of immunoagents. This Bos taurus (Bovine) protein is Lysozyme C-1 (LYZ1).